The chain runs to 474 residues: Glutamate--tRNA ligase (474 aa).

The 'HIGH' region signature appears at 18–28 (PSPTGFLHIGG). Residues 244 to 248 (KLSKR) carry the 'KMSKS' region motif. Position 247 (lysine 247) interacts with ATP.

The protein belongs to the class-I aminoacyl-tRNA synthetase family. Glutamate--tRNA ligase type 1 subfamily. In terms of assembly, monomer.

The protein resides in the cytoplasm. The catalysed reaction is tRNA(Glu) + L-glutamate + ATP = L-glutamyl-tRNA(Glu) + AMP + diphosphate. In terms of biological role, catalyzes the attachment of glutamate to tRNA(Glu) in a two-step reaction: glutamate is first activated by ATP to form Glu-AMP and then transferred to the acceptor end of tRNA(Glu). The chain is Glutamate--tRNA ligase from Caulobacter sp. (strain K31).